The primary structure comprises 252 residues: Vacuolar-sorting protein dot2 (252 aa).

This sequence belongs to the SNF8 family. As to quaternary structure, component of the endosomal sorting complex required for transport II (ESCRT-II).

The protein resides in the cytoplasm. It is found in the nucleus. The protein localises to the endosome membrane. Its function is as follows. Component of the endosomal sorting complex required for transport II (ESCRT-II), which is required for multivesicular body (MVB) formation and sorting of endosomal cargo proteins into MVBs. The MVB pathway mediates delivery of transmembrane proteins into the lumen of the lysosome for degradation. The ESCRT-II complex is probably involved in the recruitment of the ESCRT-III complex. Negatively regulates meiotic spindle pole body maturation via indirect regulation of the pcp1 gene. Required for efficient entry into pre-meiotic S phase. The sequence is that of Vacuolar-sorting protein dot2 (dot2) from Schizosaccharomyces pombe (strain 972 / ATCC 24843) (Fission yeast).